The chain runs to 268 residues: 4-hydroxy-tetrahydrodipicolinate reductase (268 aa).

Residues 9–14, Glu35, 99–101, and 123–126 each bind NAD(+); these read GVCGRM, GTT, and APNY. The active-site Proton donor/acceptor is His156. His157 provides a ligand contact to (S)-2,3,4,5-tetrahydrodipicolinate. Lys160 serves as the catalytic Proton donor. Position 166–167 (166–167) interacts with (S)-2,3,4,5-tetrahydrodipicolinate; the sequence is GT.

Belongs to the DapB family.

It is found in the cytoplasm. It carries out the reaction (S)-2,3,4,5-tetrahydrodipicolinate + NAD(+) + H2O = (2S,4S)-4-hydroxy-2,3,4,5-tetrahydrodipicolinate + NADH + H(+). It catalyses the reaction (S)-2,3,4,5-tetrahydrodipicolinate + NADP(+) + H2O = (2S,4S)-4-hydroxy-2,3,4,5-tetrahydrodipicolinate + NADPH + H(+). Its pathway is amino-acid biosynthesis; L-lysine biosynthesis via DAP pathway; (S)-tetrahydrodipicolinate from L-aspartate: step 4/4. Catalyzes the conversion of 4-hydroxy-tetrahydrodipicolinate (HTPA) to tetrahydrodipicolinate. In Magnetococcus marinus (strain ATCC BAA-1437 / JCM 17883 / MC-1), this protein is 4-hydroxy-tetrahydrodipicolinate reductase.